The chain runs to 134 residues: NADH-quinone oxidoreductase subunit A (134 aa).

3 helical membrane-spanning segments follow: residues 12–32, 64–84, and 93–113; these read FAIY…LAAL, FYLV…LFAW, and WVGF…LLYL.

It belongs to the complex I subunit 3 family. NDH-1 is composed of 14 different subunits. Subunits NuoA, H, J, K, L, M, N constitute the membrane sector of the complex.

Its subcellular location is the cell inner membrane. The enzyme catalyses a quinone + NADH + 5 H(+)(in) = a quinol + NAD(+) + 4 H(+)(out). NDH-1 shuttles electrons from NADH, via FMN and iron-sulfur (Fe-S) centers, to quinones in the respiratory chain. The immediate electron acceptor for the enzyme in this species is believed to be ubiquinone. Couples the redox reaction to proton translocation (for every two electrons transferred, four hydrogen ions are translocated across the cytoplasmic membrane), and thus conserves the redox energy in a proton gradient. This is NADH-quinone oxidoreductase subunit A from Aeromonas salmonicida (strain A449).